Consider the following 2225-residue polypeptide: MAALVLEDGSVLRGQPFGAAVSTAGEVVFQTGMVGYPEALTDPSYKAQILVLTYPLIGNYGIPPDEMDEFGLCKWFESSGIHVAALVVGECCPTPSHWSATRTLHEWLQQHGIPGLQGVDTRELTKKLREQGSLLGKLVQNGTEPSSLPFLDPNARPLVPEVSIKTPRVFNTGGAPRILALDCGLKYNQIRCLCQRGAEVTVVPWDHALDSQEYEGLFLSNGPGDPASYPSVVSTLSRVLSEPNPRPVFGICLGHQLLALAIGAKTYKMRYGNRGHNQPCLLVGSGRCFLTSQNHGFAVETDSLPADWAPLFTNANDGSNEGIVHNSLPFFSVQFHPEHQAGPSDMELLFDIFLETVKEATAGNPGGQTVRERLTERLCPPGIPTPGSGLPPPRKVLILGSGGLSIGQAGEFDYSGSQAIKALKEENIQTLLINPNIATVQTSQGLADKVYFLPITPHYVTQVIRNERPDGVLLTFGGQTALNCGVELTKAGVLARYGVRVLGTPVETIELTEDRRAFAARMAEIGEHVAPSEAANSLEQAQAAAERLGYPVLVRAAFALGGLGSGFASNREELSALVAPAFAHTSQVLVDKSLKGWKEIEYEVVRDAYGNCVTVCNMENLDPLGIHTGESIVVAPSQTLNDREYQLLRQTAIKVTQHLGIVGECNVQYALNPESEQYYIIEVNARLSRSSALASKATGYPLAYVAAKLALGIPLPELRNSVTGGTAAFEPSVDYCVVKIPRWDLSKFLRVSTKIGSCMKSVGEVMGIGRSFEEAFQKALRMVDENCVGFDHTVKPVSDMELETPTDKRIFVVAAALWAGYSVDRLYELTRIDRWFLHRMKRIIAHAQLLEQHRGQPLPPDLLQQAKCLGFSDKQIALAVLSTELAVRKLRQELGICPAVKQIDTVAAEWPAQTNYLYLTYWGTTHDLTFRTPHVLVLGSGVYRIGSSVEFDWCAVGCIQQLRKMGYKTIMVNYNPETVSTDYDMCDRLYFDEISFEVVMDIYELENPEGVILSMGGQLPNNMAMALHRQQCRVLGTSPEAIDSAENRFKFSRLLDTIGISQPQWRELSDLESARQFCQTVGYPCVVRPSYVLSGAAMNVAYTDGDLERFLSSAAAVSKEHPVVISKFIQEAKEIDVDAVASDGVVAAIAISEHVENAGVHSGDATLVTPPQDITAKTLERIKAIVHAVGQELQVTGPFNLQLIAKDDQLKVIECNVRVSRSFPFVSKTLGVDLVALATRVIMGEEVEPVGLMTGSGVVGVKVPQFSFSRLAGADVVLGVEMTSTGEVAGFGESRCEAYLKAMLSTGFKIPKKNILLTIGSYKNKSELLPTVRLLESLGYSLYASLGTADFYTEHGVKVTAVDWHFEEAVDGECPPQRSILEQLAEKNFELVINLSMRGAGGRRLSSFVTKGYRTRRLAADFSVPLIIDIKCTKLFVEALGQIGPAPPLKVHVDCMTSQKLVRLPGLIDVHVHLREPGGTHKEDFASGTAAALAGGITMVCAMPNTRPPIIDAPALALAQKLAEAGARCDFALFLGASSENAGTLGTVAGSAAGLKLYLNETFSELRLDSVVQWMEHFETWPSHLPIVAHAEQQTVAAVLMVAQLTQRSVHICHVARKEEILLIKAAKARGLPVTCEVAPHHLFLSHDDLERLGPGKGEVRPELGSRQDVEALWENMAVIDCFASDHAPHTLEEKCGSRPPPGFPGLETMLPLLLTAVSEGRLSLDDLLQRLHHNPRRIFHLPPQEDTYVEVDLEHEWTIPSHMPFSKAHWTPFEGQKVKGTVRRVVLRGEVAYIDGQVLVPPGYGQDVRKWPQGAVPQLPPSAPATSEMTTTPERPRRGIPGLPDGRFHLPPRIHRASDPGLPAEEPKEKSSRKVAEPELMGTPDGTCYPPPPVPRQASPQNLGTPGLLHPQTSPLLHSLVGQHILSVQQFTKDQMSHLFNVAHTLRMMVQKERSLDILKGKVMASMFYEVSTRTSSSFAAAMARLGGAVLSFSEATSSVQKGESLADSVQTMSCYADVVVLRHPQPGAVELAAKHCRRPVINAGDGVGEHPTQALLDIFTIREELGTVNGMTITMVGDLKHGRTVHSLACLLTQYRVSLRYVAPPSLRMPPTVRAFVASRGTKQEEFESIEEALPDTDVLYMTRIQKERFGSTQEYEACFGQFILTPHIMTRAKKKMVVMHPMPRVNEISVEVDSDPRAAYFRQAENGMYIRMALLATVLGRF.

Alanine 2 carries the post-translational modification N-acetylalanine. The interval 2 to 365 (AALVLEDGSV…TVKEATAGNP (364 aa)) is GATase (Glutamine amidotransferase). Serine 44, glycine 222, and glycine 224 together coordinate L-glutamine. The Glutamine amidotransferase type-1 domain maps to 177-363 (RILALDCGLK…LETVKEATAG (187 aa)). Cysteine 252 functions as the Nucleophile; for GATase activity in the catalytic mechanism. Leucine 253, glutamine 256, asparagine 294, glycine 296, and phenylalanine 297 together coordinate L-glutamine. Residues histidine 336 and glutamate 338 each act as for GATase activity in the active site. Residues 366 to 394 (GGQTVRERLTERLCPPGIPTPGSGLPPPR) are linker. A CPSase A region spans residues 395 to 933 (KVLILGSGGL…TTHDLTFRTP (539 aa)). Residues 395 to 1455 (KVLILGSGGL…APPLKVHVDC (1061 aa)) are CPSase (Carbamoyl phosphate synthase). Residue threonine 456 is modified to Phosphothreonine; by MAPK1. Positions 515, 555, 561, 562, 592, 599, 625, 626, 627, 668, and 682 each coordinate ATP. The 193-residue stretch at 519 to 711 (AARMAEIGEH…LAYVAAKLAL (193 aa)) folds into the ATP-grasp 1 domain. Positions 668, 682, and 684 each coordinate Mg(2+). Positions 668, 682, and 684 each coordinate Mn(2+). N6-acetyllysine is present on lysine 747. Residues 934 to 1455 (HVLVLGSGVY…APPLKVHVDC (522 aa)) are CPSase B. Position 1038 is a phosphoserine (serine 1038). The ATP-grasp 2 domain occupies 1052 to 1243 (SRLLDTIGIS…LVALATRVIM (192 aa)). Residues arginine 1088, lysine 1127, isoleucine 1129, glutamate 1134, glycine 1159, valine 1160, histidine 1161, serine 1162, glutamine 1202, and glutamate 1214 each contribute to the ATP site. Residues glutamine 1202, glutamate 1214, and asparagine 1216 each contribute to the Mg(2+) site. Glutamine 1202, glutamate 1214, and asparagine 1216 together coordinate Mn(2+). The region spanning 1308 to 1462 (FKIPKKNILL…VDCMTSQKLV (155 aa)) is the MGS-like domain. Serine 1406 bears the Phosphoserine; by PKA mark. Lysine 1411 bears the N6-acetyllysine mark. Residues 1456 to 1788 (MTSQKLVRLP…VKGTVRRVVL (333 aa)) are DHOase (dihydroorotase). Positions 1471 and 1473 each coordinate Zn(2+). Residues arginine 1475 and asparagine 1505 each contribute to the (S)-dihydroorotate site. Zn(2+) contacts are provided by lysine 1556, histidine 1590, cysteine 1613, histidine 1614, and glutamate 1637. N6-carboxylysine is present on lysine 1556. Arginine 1661 provides a ligand contact to (S)-dihydroorotate. Position 1686 (aspartate 1686) interacts with Zn(2+). Catalysis depends on aspartate 1686, which acts as the For DHOase activity. 2 residues coordinate (S)-dihydroorotate: histidine 1690 and proline 1702. Residues 1789–1917 (RGEVAYIDGQ…GLLHPQTSPL (129 aa)) form a linker region. Residues 1811–1899 (KWPQGAVPQL…YPPPPVPRQA (89 aa)) form a disordered region. Positions 1825–1834 (PATSEMTTTP) are enriched in polar residues. A Phosphoserine; by RPS6KB1 and PKA modification is found at serine 1859. Basic and acidic residues predominate over residues 1866–1878 (EEPKEKSSRKVAE). Serine 1873 bears the Phosphoserine; by PKC; in vitro mark. At threonine 1884 the chain carries Phosphothreonine. Phosphoserine is present on residues serine 1900 and serine 1938. Residues 1918-2225 (LHSLVGQHIL…ALLATVLGRF (308 aa)) are ATCase (Aspartate transcarbamylase). Residues arginine 1975 and threonine 1976 each coordinate carbamoyl phosphate. An L-aspartate-binding site is contributed by lysine 2003. Residues arginine 2024, histidine 2052, and glutamine 2055 each contribute to the carbamoyl phosphate site. Positions 2085 and 2146 each coordinate L-aspartate. Residues methionine 2185 and proline 2186 each contribute to the carbamoyl phosphate site.

It in the N-terminal section; belongs to the CarA family. The protein in the 2nd section; belongs to the CarB family. This sequence in the 3rd section; belongs to the metallo-dependent hydrolases superfamily. DHOase family. CAD subfamily. In the C-terminal section; belongs to the aspartate/ornithine carbamoyltransferase superfamily. ATCase family. Homohexamer. Interacts with CIPC. It depends on Zn(2+) as a cofactor. The cofactor is Mg(2+). Mn(2+) is required as a cofactor. Activated by MAP kinase (Erk1/2) phosphorylation just prior to the S phase of the cell cycle, when the demand for pyrimidine nucleotides is greatest, and down-regulated as the cells emerge from S phase by protein kinase A (PKA) phosphorylation. Phosphorylation at Ser-1859 by RPS6KB1 downstream of MTOR promotes oligomerization and stimulates dihydroorotase activity. Phosphorylation at Ser-1406 reduces sensitivity to feedback inhibition by UTP.

It is found in the cytoplasm. It localises to the nucleus. The enzyme catalyses hydrogencarbonate + L-glutamine + 2 ATP + H2O = carbamoyl phosphate + L-glutamate + 2 ADP + phosphate + 2 H(+). The catalysed reaction is L-glutamine + H2O = L-glutamate + NH4(+). It carries out the reaction hydrogencarbonate + NH4(+) + 2 ATP = carbamoyl phosphate + 2 ADP + phosphate + 2 H(+). It catalyses the reaction carbamoyl phosphate + L-aspartate = N-carbamoyl-L-aspartate + phosphate + H(+). The enzyme catalyses (S)-dihydroorotate + H2O = N-carbamoyl-L-aspartate + H(+). It functions in the pathway pyrimidine metabolism; UMP biosynthesis via de novo pathway; (S)-dihydroorotate from bicarbonate: step 1/3. The protein operates within pyrimidine metabolism; UMP biosynthesis via de novo pathway; (S)-dihydroorotate from bicarbonate: step 2/3. Its pathway is pyrimidine metabolism; UMP biosynthesis via de novo pathway; (S)-dihydroorotate from bicarbonate: step 3/3. Its activity is regulated as follows. Allosterically regulated and controlled by phosphorylation. 5-phosphoribose 1-diphosphate (PRPP) is an activator while UMP and UTP are inhibitors of the CPSase reaction. Multifunctional protein that encodes the first 3 enzymatic activities of the de novo pyrimidine pathway: carbamoylphosphate synthetase (CPSase; EC 6.3.5.5), aspartate transcarbamylase (ATCase; EC 2.1.3.2) and dihydroorotase (DHOase; EC 3.5.2.3). The CPSase-function is accomplished in 2 steps, by a glutamine-dependent amidotransferase activity (GATase) that binds and cleaves glutamine to produce ammonia, followed by an ammonium-dependent carbamoyl phosphate synthetase, which reacts with the ammonia, hydrogencarbonate and ATP to form carbamoyl phosphate. The endogenously produced carbamoyl phosphate is sequestered and channeled to the ATCase active site. ATCase then catalyzes the formation of carbamoyl-L-aspartate from L-aspartate and carbamoyl phosphate. In the last step, DHOase catalyzes the cyclization of carbamoyl aspartate to dihydroorotate. The sequence is that of Multifunctional protein CAD from Homo sapiens (Human).